The primary structure comprises 190 residues: Corticoliberin (190 aa).

Positions 1–24 (MRLPLLVSVGVLLVALLPSPPCRA) are cleaved as a signal peptide. Residues 25 to 147 (LLSRGPIPGA…QEAPAARKRR (123 aa)) constitute a propeptide that is removed on maturation. 2 disordered regions span residues 33-53 (GARQ…LPQP) and 115-151 (PRRP…SQEP). The segment covering 41 to 53 (PQPLSFFQPLPQP) has biased composition (low complexity). Alanine 188 is modified (alanine amide).

It belongs to the sauvagine/corticotropin-releasing factor/urotensin I family. Interacts (via C-terminus) with CRFR1 (via N-terminal extracellular domain). As to expression, produced by the hypothalamus.

It localises to the secreted. In terms of biological role, hormone regulating the release of corticotropin from pituitary gland. Induces NLRP6 in intestinal epithelial cells, hence may influence gut microbiota profile. The sequence is that of Corticoliberin (CRH) from Ovis aries (Sheep).